The sequence spans 617 residues: V-type proton ATPase catalytic subunit A (617 aa).

Residue aspartate 2 is modified to N-acetylalanine. Threonine 136 is modified (phosphothreonine). 250–257 provides a ligand contact to ATP; the sequence is GAFGCGKT. A Phosphoserine; by AMPK modification is found at serine 384.

The protein belongs to the ATPase alpha/beta chains family. As to quaternary structure, V-ATPase is a heteromultimeric enzyme made up of two complexes: the ATP-hydrolytic V1 complex and the proton translocation V0 complex. The V1 complex consists of three catalytic AB heterodimers that form a heterohexamer, three peripheral stalks each consisting of EG heterodimers, one central rotor including subunits D and F, and the regulatory subunits C and H. The proton translocation complex V0 consists of the proton transport subunit a, a ring of proteolipid subunits c9c'', rotary subunit d, subunits e and f, and the accessory subunits ATP6AP1/Ac45 and ATP6AP2/PRR. Interacts with the V0 complex V-ATPase subunit a4 ATP6V0A4. Interacts with WFS1. Interacts with alpha-crystallin B chain/CRYAB and with MTOR, forming a ternary complex. (Microbial infection) Interacts with Rabies virus protein M; this interaction promotes virion uncoating. In terms of processing, phosphorylation at Ser-384 by AMPK down-regulates its enzyme activity. In terms of tissue distribution, high expression in the skin.

The protein localises to the cytoplasm. Its subcellular location is the cytosol. It localises to the cytoplasmic vesicle. The protein resides in the secretory vesicle. It is found in the clathrin-coated vesicle membrane. The protein localises to the lysosome. It carries out the reaction ATP + H2O + 4 H(+)(in) = ADP + phosphate + 5 H(+)(out). ATP hydrolysis occurs at the interface between the nucleotide-binding domains of subunits A and B. ATP hydrolysis triggers a conformational change in the subunits D and F, which induces a shift of subunit d. The c-ring is subsequently rotated and results in a continuous proton translocation across the membrane. Functionally, catalytic subunit of the V1 complex of vacuolar(H+)-ATPase (V-ATPase), a multisubunit enzyme composed of a peripheral complex (V1) that hydrolyzes ATP and a membrane integral complex (V0) that translocates protons. V-ATPase is responsible for acidifying and maintaining the pH of intracellular compartments and in some cell types, is targeted to the plasma membrane, where it is responsible for acidifying the extracellular environment. In aerobic conditions, involved in intracellular iron homeostasis, thus triggering the activity of Fe(2+) prolyl hydroxylase (PHD) enzymes, and leading to HIF1A hydroxylation and subsequent proteasomal degradation. May play a role in neurite development and synaptic connectivity. In terms of biological role, (Microbial infection) Plays an important role in virion uncoating during Rabies virus replication after membrane fusion. Specifically, participates in the dissociation of incoming viral matrix M proteins uncoating through direct interaction. This is V-type proton ATPase catalytic subunit A (ATP6V1A) from Homo sapiens (Human).